Consider the following 158-residue polypeptide: C-type lectin galactose-binding isoform (158 aa).

The first 23 residues, 1 to 23, serve as a signal peptide directing secretion; sequence MGRFLLVTLSLLVVAFSLNGANS. 3 disulfides stabilise this stretch: Cys26–Cys37, Cys54–Cys154, and Cys129–Cys146. The region spanning 33 to 155 is the C-type lectin domain; it reads RNGFCYKVFN…CTALRPFLCQ (123 aa). The Ca(2+) site is built by Gln119, Asp121, and Glu127. Positions 119–121 match the Galactose-binding motif; that stretch reads QPD. Residue Asn134 is glycosylated (N-linked (GlcNAc...) asparagine). Ca(2+) contacts are provided by Asn142 and Asp143.

The protein belongs to the true venom lectin family. Homodimer; disulfide-linked. Expressed by the venom gland.

It is found in the secreted. Its function is as follows. Galactose-binding lectin that binds to and agglutinates erythrocytes in a calcium-dependent manner. The protein is C-type lectin galactose-binding isoform of Pseudechis porphyriacus (Red-bellied black snake).